Consider the following 550-residue polypeptide: Chaperonin GroEL (550 aa).

Residues 30–33, K51, 87–91, G415, and D497 each bind ATP; these read TLGP and DGTTT.

It belongs to the chaperonin (HSP60) family. As to quaternary structure, forms a cylinder of 14 subunits composed of two heptameric rings stacked back-to-back. Interacts with the co-chaperonin GroES.

The protein resides in the cytoplasm. It catalyses the reaction ATP + H2O + a folded polypeptide = ADP + phosphate + an unfolded polypeptide.. In terms of biological role, together with its co-chaperonin GroES, plays an essential role in assisting protein folding. The GroEL-GroES system forms a nano-cage that allows encapsulation of the non-native substrate proteins and provides a physical environment optimized to promote and accelerate protein folding. The protein is Chaperonin GroEL of Yersinia enterocolitica.